A 96-amino-acid polypeptide reads, in one-letter code: Protein RnfH (96 aa).

It belongs to the UPF0125 (RnfH) family.

This chain is Protein RnfH, found in Cronobacter sakazakii (strain ATCC BAA-894) (Enterobacter sakazakii).